The sequence spans 485 residues: Glutamyl-tRNA(Gln) amidotransferase subunit A (485 aa).

Residues K78 and S153 each act as charge relay system in the active site. Residue S177 is the Acyl-ester intermediate of the active site.

Belongs to the amidase family. GatA subfamily. Heterotrimer of A, B and C subunits.

The enzyme catalyses L-glutamyl-tRNA(Gln) + L-glutamine + ATP + H2O = L-glutaminyl-tRNA(Gln) + L-glutamate + ADP + phosphate + H(+). Functionally, allows the formation of correctly charged Gln-tRNA(Gln) through the transamidation of misacylated Glu-tRNA(Gln) in organisms which lack glutaminyl-tRNA synthetase. The reaction takes place in the presence of glutamine and ATP through an activated gamma-phospho-Glu-tRNA(Gln). The protein is Glutamyl-tRNA(Gln) amidotransferase subunit A of Desulfatibacillum aliphaticivorans.